A 699-amino-acid polypeptide reads, in one-letter code: Chitin synthase 7 (699 aa).

A run of 6 helical transmembrane segments spans residues Ile19–Leu39, Ser58–Leu80, Leu98–Ile118, Phe445–Ile465, Leu474–Gly494, and Val507–Ala527. The interval Ala628–Glu648 is disordered.

Belongs to the chitin synthase family. Class VI subfamily.

It is found in the cell membrane. It catalyses the reaction [(1-&gt;4)-N-acetyl-beta-D-glucosaminyl](n) + UDP-N-acetyl-alpha-D-glucosamine = [(1-&gt;4)-N-acetyl-beta-D-glucosaminyl](n+1) + UDP + H(+). Functionally, polymerizes chitin, a structural polymer of the cell wall and septum, by transferring the sugar moiety of UDP-GlcNAc to the non-reducing end of the growing chitin polymer. Plays a role in cell wall integrity. Required to successfully penetrate the host plants and thus plays a key role in pathogenicity. The sequence is that of Chitin synthase 7 from Verticillium dahliae (strain VdLs.17 / ATCC MYA-4575 / FGSC 10137) (Verticillium wilt).